The primary structure comprises 140 residues: Nucleoside diphosphate kinase (140 aa).

Lys11, Phe59, Arg87, Thr93, Arg104, and Asn114 together coordinate ATP. The active-site Pros-phosphohistidine intermediate is His117.

It belongs to the NDK family. As to quaternary structure, homotetramer. Mg(2+) serves as cofactor.

It localises to the cytoplasm. It catalyses the reaction a 2'-deoxyribonucleoside 5'-diphosphate + ATP = a 2'-deoxyribonucleoside 5'-triphosphate + ADP. The enzyme catalyses a ribonucleoside 5'-diphosphate + ATP = a ribonucleoside 5'-triphosphate + ADP. In terms of biological role, major role in the synthesis of nucleoside triphosphates other than ATP. The ATP gamma phosphate is transferred to the NDP beta phosphate via a ping-pong mechanism, using a phosphorylated active-site intermediate. The polypeptide is Nucleoside diphosphate kinase (Sinorhizobium medicae (strain WSM419) (Ensifer medicae)).